A 309-amino-acid polypeptide reads, in one-letter code: UPF0276 protein RB0508 (309 aa).

Belongs to the UPF0276 family.

This chain is UPF0276 protein RB0508, found in Rhizobium meliloti (strain 1021) (Ensifer meliloti).